The following is a 748-amino-acid chain: Cytosolic phospholipase A2 (748 aa).

The tract at residues 1–178 (MSFIDPYQHI…MRKLLGPKKS (178 aa)) is phospholipid binding. Serine 2 is modified (phosphoserine). The 117-residue stretch at 6-122 (PYQHIIVEHQ…KVGEKKEVPF (117 aa)) folds into the C2 domain. Positions 40, 41, 43, 65, 93, 94, and 95 each coordinate Ca(2+). A PLA2c domain is found at 138-739 (VCSSPDLRFS…SNVEARRFFN (602 aa)). Serine 228 acts as the Nucleophile in catalysis. Phosphothreonine is present on threonine 268. The interval 428 to 458 (HIVSNDSSDSDDESQEPKGTEGEDAEREYQN) is disordered. Phosphoserine is present on residues serine 434, serine 435, and serine 437. The segment covering 442 to 458 (QEPKGTEGEDAEREYQN) has biased composition (basic and acidic residues). A Phosphoserine; by MAPK modification is found at serine 505. Serine 514 is subject to Phosphoserine. Lysine 540 participates in a covalent cross-link: Glycyl lysine isopeptide (Lys-Gly) (interchain with G-Cter in SUMO2). Residue aspartate 548 is the Proton acceptor of the active site. A Glycyl lysine isopeptide (Lys-Gly) (interchain with G-Cter in SUMO2) cross-link involves residue lysine 605. Phosphoserine is present on residues serine 726 and serine 728.

In terms of assembly, interacts with KAT5. Phosphorylated at both Ser-505 and Ser-726 in response to mitogenic stimuli.

Its subcellular location is the cytoplasm. The protein resides in the golgi apparatus membrane. It localises to the nucleus envelope. The catalysed reaction is a 1,2-diacyl-sn-glycero-3-phosphocholine + H2O = a 1-acyl-sn-glycero-3-phosphocholine + a fatty acid + H(+). It carries out the reaction a 1-O-alkyl-2-acyl-sn-glycero-3-phosphocholine + H2O = a 1-O-alkyl-sn-glycero-3-phosphocholine + a fatty acid + H(+). The enzyme catalyses a 1-acyl-sn-glycero-3-phosphocholine + H2O = sn-glycerol 3-phosphocholine + a fatty acid + H(+). It catalyses the reaction 1-hexadecanoyl-2-(5Z,8Z,11Z,14Z-eicosatetraenoyl)-sn-glycero-3-phosphocholine + H2O = 1-hexadecanoyl-sn-glycero-3-phosphocholine + (5Z,8Z,11Z,14Z)-eicosatetraenoate + H(+). The catalysed reaction is 1,2-di-(5Z,8Z,11Z,14Z-eicosatetraenoyl)-sn-glycero-3-phosphocholine + H2O = 1-(5Z,8Z,11Z,14Z-eicosatetraenoyl)-sn-glycero-3-phosphocholine + (5Z,8Z,11Z,14Z)-eicosatetraenoate + H(+). It carries out the reaction 1-octadecanoyl-2-(5Z,8Z,11Z,14Z-eicosatetraenoyl)-sn-glycero-3-phosphocholine + H2O = 1-octadecanoyl-sn-glycero-3-phosphocholine + (5Z,8Z,11Z,14Z)-eicosatetraenoate + H(+). The enzyme catalyses 1-hexadecanoyl-2-(9Z,12Z-octadecadienoyl)-sn-glycero-3-phosphocholine + H2O = (9Z,12Z)-octadecadienoate + 1-hexadecanoyl-sn-glycero-3-phosphocholine + H(+). It catalyses the reaction 1-octadecanoyl-2-(9Z,12Z,15Z-octadecatrienoyl)-sn-glycero-3-phosphocholine + H2O = (9Z,12Z,15Z)-octadecatrienoate + 1-octadecanoyl-sn-glycero-3-phosphocholine + H(+). The catalysed reaction is 1-(5Z,8Z,11Z,14Z-eicosatetraenoyl)-2-hexadecanoyl-sn-glycero-3-phosphocholine + H2O = 1-(5Z,8Z,11Z,14Z-eicosatetraenoyl)-sn-glycero-3-phosphocholine + hexadecanoate + H(+). It carries out the reaction 1-O-hexadecyl-2-(5Z,8Z,11Z,14Z)-eicosatetraenoyl-sn-glycero-3-phosphocholine + H2O = 1-O-hexadecyl-sn-glycero-3-phosphocholine + (5Z,8Z,11Z,14Z)-eicosatetraenoate + H(+). The enzyme catalyses 1,2-di-(9Z-octadecenoyl)-sn-glycero-3-phospho-(1'-sn-glycerol) + H2O = 1-(9Z-octadecenoyl)-sn-glycero-3-phospho-(1'-sn-glycerol) + (9Z)-octadecenoate + H(+). It catalyses the reaction 1-octadecanoyl-2-(5Z,8Z,11Z,14Z-eicosatetraenoyl)-sn-glycero-3-phosphate + H2O = 1-octadecanoyl-sn-glycero-3-phosphate + (5Z,8Z,11Z,14Z)-eicosatetraenoate + H(+). The catalysed reaction is 1-hexadecanoyl-sn-glycero-3-phosphocholine + H2O = sn-glycerol 3-phosphocholine + hexadecanoate + H(+). It carries out the reaction 2-(prostaglandin E2)-sn-glycero-3-phosphoethanolamine + H2O = sn-glycero-3-phosphoethanolamine + prostaglandin E2 + H(+). The enzyme catalyses 2-[(15S)-hydroxy-(5Z,8Z,11Z,13E)-eicosatetraenoyl]-sn-glycero-3-phosphocholine + H2O = (15S)-hydroxy-(5Z,8Z,11Z,13E)-eicosatetraenoate + sn-glycerol 3-phosphocholine + H(+). It catalyses the reaction 2-[(15R)-hydroxy-(5Z,8Z,11Z,13E)-eicosatetraenoyl]-sn-glycero-3-phosphocholine + H2O = (15R)-hydroxy-(5Z,8Z,11Z,13E)-eicosatetraenoate + sn-glycerol 3-phosphocholine + H(+). The catalysed reaction is 2-(prostaglandin E2)-sn-glycero-3-phosphocholine + H2O = prostaglandin E2 + sn-glycerol 3-phosphocholine + H(+). It carries out the reaction 2-[(11R)-hydroxy-(5Z,8Z,12E,14Z)-eicosatetraenoyl]-sn-glycero-3-phosphocholine + H2O = (11R)-hydroxy-(5Z,8Z,12E,14Z)-eicosatetraenoate + sn-glycerol 3-phosphocholine + H(+). The enzyme catalyses 1-(5Z,8Z,11Z,14Z-eicosatetraenoyl)-2-O-hexadecyl-sn-glycero-3-phosphocholine + H2O = 2-O-hexadecyl-sn-glycero-3-phosphocholine + (5Z,8Z,11Z,14Z)-eicosatetraenoate + H(+). It catalyses the reaction 1-octadecanoyl-2-(5Z,8Z,11Z,14Z-eicosatetraenoyl)-sn-glycero-3-phosphocholine + glycerol = 1-(5Z,8Z,11Z,14Z-eicosatetraenoyl)-glycerol + 1-octadecanoyl-sn-glycero-3-phosphocholine. The catalysed reaction is 1-octadecanoyl-2-(9Z,12Z,15Z-octadecatrienoyl)-sn-glycero-3-phosphocholine + glycerol = 1-(9Z,12Z,15Z-octadecatrienoyl)-glycerol + 1-octadecanoyl-sn-glycero-3-phosphocholine. Its pathway is membrane lipid metabolism; glycerophospholipid metabolism. It functions in the pathway lipid metabolism; arachidonate metabolism. It participates in lipid metabolism; prostaglandin biosynthesis. The protein operates within lipid metabolism; leukotriene B4 biosynthesis. Activated by cytosolic calcium, which is necessary for binding to membrane lipids. Activated by phosphorylation in response to mitogenic stimuli. Its function is as follows. Has primarily calcium-dependent phospholipase and lysophospholipase activities, with a major role in membrane lipid remodeling and biosynthesis of lipid mediators of the inflammatory response. Plays an important role in embryo implantation and parturition through its ability to trigger prostanoid production. Preferentially hydrolyzes the ester bond of the fatty acyl group attached at sn-2 position of phospholipids (phospholipase A2 activity). Selectively hydrolyzes sn-2 arachidonoyl group from membrane phospholipids, providing the precursor for eicosanoid biosynthesis via the cyclooxygenase pathway. In an alternative pathway of eicosanoid biosynthesis, hydrolyzes sn-2 fatty acyl chain of eicosanoid lysophopholipids to release free bioactive eicosanoids. Hydrolyzes the ester bond of the fatty acyl group attached at sn-1 position of phospholipids (phospholipase A1 activity) only if an ether linkage rather than an ester linkage is present at the sn-2 position. This hydrolysis is not stereospecific. Has calcium-independent phospholipase A2 and lysophospholipase activities in the presence of phosphoinositides. Has O-acyltransferase activity. Catalyzes the transfer of fatty acyl chains from phospholipids to a primary hydroxyl group of glycerol (sn-1 or sn-3), potentially contributing to monoacylglycerol synthesis. The protein is Cytosolic phospholipase A2 (PLA2G4A) of Oryctolagus cuniculus (Rabbit).